We begin with the raw amino-acid sequence, 505 residues long: ATP synthase subunit alpha (505 aa).

170–177 (GDRQTGKS) serves as a coordination point for ATP.

This sequence belongs to the ATPase alpha/beta chains family. F-type ATPases have 2 components, CF(1) - the catalytic core - and CF(0) - the membrane proton channel. CF(1) has five subunits: alpha(3), beta(3), gamma(1), delta(1), epsilon(1). CF(0) has four main subunits: a(1), b(1), b'(1) and c(9-12).

The protein localises to the cellular thylakoid membrane. It carries out the reaction ATP + H2O + 4 H(+)(in) = ADP + phosphate + 5 H(+)(out). Functionally, produces ATP from ADP in the presence of a proton gradient across the membrane. The alpha chain is a regulatory subunit. In Prochlorococcus marinus (strain MIT 9312), this protein is ATP synthase subunit alpha.